We begin with the raw amino-acid sequence, 439 residues long: MHKVTKFAIRHLSDKASRFVPKAGVYPKGYAVGGIHCGVKKDGKSLDLAILQNTFGKNASAAGVFTVNKFKAAPVQVSKKILKEKSGSGINSFVINSGNANAVTGTQGMKDAEDMVLVTDSVLENPTNSSLVMSTGVIGNNLPIDKILGGIPKLASQHLGNTHQHWIDCATAICTTDTFPKLVTKRFSIGDDTYTLAGLCKGAGMICPNMATLLGFFVTDAPVTPSALQQILKYAVDRSFNSITVDGDMSTNDTIVAMANGAAGGEVIDNTSSCAERYSRLQAEIVDFAQQLAQLVVRDGEGATKFITIRVKDALSYKDAKSIASSIANSSLFKTAMYGKDANWGRILCAIGYADVTSANSVIPEKTSVKFVPVDGSEHLNLLVNGEPEQVDEERASEILQNEDLIVEINLGTNGGQSADFWTCDLSHEYVTINGDYRS.

Substrate-binding residues include T175, K201, T212, E301, N434, and S439. T212 serves as the catalytic Nucleophile.

This sequence belongs to the ArgJ family. Heterodimer of an alpha and a beta chain. Post-translationally, the alpha and beta chains are autoproteolytically processed from a single precursor protein within the mitochondrion.

The protein localises to the mitochondrion matrix. The catalysed reaction is N(2)-acetyl-L-ornithine + L-glutamate = N-acetyl-L-glutamate + L-ornithine. It catalyses the reaction L-glutamate + acetyl-CoA = N-acetyl-L-glutamate + CoA + H(+). The protein operates within amino-acid biosynthesis; L-arginine biosynthesis; L-ornithine and N-acetyl-L-glutamate from L-glutamate and N(2)-acetyl-L-ornithine (cyclic): step 1/1. It functions in the pathway amino-acid biosynthesis; L-arginine biosynthesis; N(2)-acetyl-L-ornithine from L-glutamate: step 1/4. Functionally, catalyzes two activities which are involved in the cyclic version of arginine biosynthesis: the synthesis of acetylglutamate from glutamate and acetyl-CoA, and of ornithine by transacetylation between acetylornithine and glutamate. This is Arginine biosynthesis bifunctional protein ArgJ, mitochondrial (ECM42) from Candida albicans (strain SC5314 / ATCC MYA-2876) (Yeast).